Here is a 508-residue protein sequence, read N- to C-terminus: MSSIVTSGVINVPRSSSSSKNLSFSSSSQLSGNKILTVSGNGAPRGRCTLKHVFLTPKAVSDSQNSQTCLDPDASRSVLGIILGGGAGTRLYPLTKKRAKPAVPLGANYRLIDIPVSNCLNSNISKIYVLTQFNSASLNRHLSRAYASNLGGYKNEGFVEVLAAQQSPENPNWFQGTADAVRQYLWLFEEHNVLEYLILAGDHLYRMDYEKFIQAHRESDADITVAALPMDEKRATAFGLMKIDEEGRIIEFAEKPKGEQLKAMKVDTTILGLDDERAKEMPFIASMGIYVISKNVMLDLLRDKFPGANDFGSEVIPGATSIGMRVQAYLYDGYWEDIGTIEAFYNANLGITKKPVPDFSFYDRSSPIYTQPRYLPPSKMLDADITDSVIGEGCVIKNCKIFHSVVGLRSCISEGAIIEDTLLMGADYYETEADKRFLAAKGSVPIGIGKNSHIKRAIVDKNARIGENVKIINSDNVQEAARETEGYFIKSGIVTIIKDALIPSGTVL.

Residues 1-27 form a disordered region; it reads MSSIVTSGVINVPRSSSSSKNLSFSSS. A chloroplast-targeting transit peptide spans 1 to 59; that stretch reads MSSIVTSGVINVPRSSSSSKNLSFSSSSQLSGNKILTVSGNGAPRGRCTLKHVFLTPKA. Residues 15–27 show a composition bias toward low complexity; the sequence is SSSSSKNLSFSSS.

Belongs to the bacterial/plant glucose-1-phosphate adenylyltransferase family. As to quaternary structure, heterotetramer. In terms of tissue distribution, seeds.

Its subcellular location is the plastid. The protein localises to the chloroplast. It catalyses the reaction alpha-D-glucose 1-phosphate + ATP + H(+) = ADP-alpha-D-glucose + diphosphate. It participates in glycan biosynthesis; starch biosynthesis. Activated by 3'phosphoglycerate, inhibited by orthophosphate. Allosteric regulation. Functionally, this protein plays a role in synthesis of starch. It catalyzes the synthesis of the activated glycosyl donor, ADP-glucose from Glc-1-P and ATP. This Vicia faba (Broad bean) protein is Glucose-1-phosphate adenylyltransferase small subunit 1, chloroplastic (AGPC).